The chain runs to 846 residues: Translation initiation factor IF-2 (846 aa).

The disordered stretch occupies residues Y198 to K219. Positions S207–K219 are enriched in basic residues. One can recognise a tr-type G domain in the interval S345–E512. The G1 stretch occupies residues G354–T361. GTP is bound at residue G354–T361. The segment at G379–H383 is G2. The G3 stretch occupies residues D400–G403. Residues D400–H404 and N454–D457 each bind GTP. Positions N454–D457 are G4. Residues S490–K492 are G5.

It belongs to the TRAFAC class translation factor GTPase superfamily. Classic translation factor GTPase family. IF-2 subfamily.

It is found in the cytoplasm. Its function is as follows. One of the essential components for the initiation of protein synthesis. Protects formylmethionyl-tRNA from spontaneous hydrolysis and promotes its binding to the 30S ribosomal subunits. Also involved in the hydrolysis of GTP during the formation of the 70S ribosomal complex. This is Translation initiation factor IF-2 from Francisella tularensis subsp. novicida (strain U112).